The following is a 701-amino-acid chain: Heterodisulfide reductase subunit A-like protein (701 aa).

152–175 (GGGIAGIFAALDIANAGYKVYLVE) contributes to the FAD binding site. One can recognise a 4Fe-4S ferredoxin-type 1 domain in the interval 239-268 (KQTWVDWDLCTGCGACTDVCPPKARVPDEF). Positions 248, 251, 254, 326, 627, 630, 633, 637, 660, 663, 666, and 670 each coordinate [4Fe-4S] cluster. 2 4Fe-4S ferredoxin-type domains span residues 618–647 (LVSE…MTKY) and 651–680 (MRAE…LHGF).

The protein belongs to the HdrA family. As to quaternary structure, the heterodisulfide reductase is composed of three subunits; HdlA, HdlB and HdlC. It forms a complex with the F420-non-reducing hydrogenase (Mvh), which provides the reducing equivalents to the heterodisulfide reductase. The cofactor is [4Fe-4S] cluster. FAD is required as a cofactor.

It is found in the cytoplasm. In terms of biological role, has oxidoreductase activity. The Hdl and Mvh subunits may together mediate electron transfer from hydrogen to an unidentified electron acceptor on the cytoplasmic side of the membrane. In Archaeoglobus profundus (strain DSM 5631 / JCM 9629 / NBRC 100127 / Av18), this protein is Heterodisulfide reductase subunit A-like protein (hdlA).